Reading from the N-terminus, the 348-residue chain is Mannonate dehydratase (348 aa).

Belongs to the mannonate dehydratase family. The cofactor is Fe(2+). Requires Mn(2+) as cofactor.

The enzyme catalyses D-mannonate = 2-dehydro-3-deoxy-D-gluconate + H2O. The protein operates within carbohydrate metabolism; pentose and glucuronate interconversion. Its function is as follows. Catalyzes the dehydration of D-mannonate. This chain is Mannonate dehydratase, found in Streptococcus uberis (strain ATCC BAA-854 / 0140J).